The chain runs to 144 residues: Leghemoglobin 3 (144 aa).

V2 bears the N-acetylvaline mark. Positions 3-144 constitute a Globin domain; that stretch reads AFTEKQDALV…DELAAAIKKA (142 aa). A nitrated tyrosine mark is found at Y26 and Y31. S46 is a binding site for heme b. S46 carries the post-translational modification Phosphoserine. H62 is an O2 binding site. Residues K65, H93, and K96 each coordinate heme b. Residue Y134 is modified to Nitrated tyrosine.

This sequence belongs to the plant globin family. As to quaternary structure, monomer. In terms of processing, nitrated mainly at Tyr-31 and, to a lower extent, at Tyr-26 and Tyr-134, in effective nodules and particularly in hypoxic conditions; this mechanism may play a protective role in the symbiosis by buffering toxic peroxynitrite NO(2)(-). Nitration level decrease during nodule senescence. Phosphorylation at Ser-46 disrupts the molecular environment of its porphyrin ring oxygen binding pocket, thus leading to a reduced oxygen consumption and to the delivery of oxygen O(2) to symbiosomes. Specifically expressed in root nodules.

The protein resides in the cytoplasm. It localises to the cytosol. It is found in the nucleus. Its function is as follows. Leghemoglobin that reversibly binds oxygen O(2) through a pentacoordinated heme iron. In root nodules, facilitates the diffusion of oxygen to the bacteroids while preventing the bacterial nitrogenase from being inactivated by buffering dioxygen, nitric oxide and carbon monoxide, and promoting the formation of reactive oxygen species (ROS, e.g. H(2)O(2)). This role is essential for symbiotic nitrogen fixation (SNF). The protein is Leghemoglobin 3 of Glycine max (Soybean).